A 149-amino-acid chain; its full sequence is Large ribosomal subunit protein bL9 (149 aa).

This sequence belongs to the bacterial ribosomal protein bL9 family.

Its function is as follows. Binds to the 23S rRNA. This chain is Large ribosomal subunit protein bL9, found in Cutibacterium acnes (strain DSM 16379 / KPA171202) (Propionibacterium acnes).